A 25-amino-acid polypeptide reads, in one-letter code: Insulin mimetic protein (25 aa).

The interval 1-25 (TKDPELKQCKKQQKKQQQYDDDDKK) is disordered.

In terms of processing, glycosylated. Expressed in seed.

The protein is Insulin mimetic protein of Cnidoscolus quercifolius.